The primary structure comprises 193 residues: UPF0301 protein SAV_5129 (193 aa).

This sequence belongs to the UPF0301 (AlgH) family.

The sequence is that of UPF0301 protein SAV_5129 from Streptomyces avermitilis (strain ATCC 31267 / DSM 46492 / JCM 5070 / NBRC 14893 / NCIMB 12804 / NRRL 8165 / MA-4680).